The chain runs to 180 residues: Regulator of G-protein signaling 8 (180 aa).

A Phosphoserine modification is found at serine 26. The region spanning 56–171 (SFDVLLSHKY…FLRSKMYLDL (116 aa)) is the RGS domain.

Interacts with GNAO1 and GNAI3.

It is found in the cell membrane. It localises to the membrane. The protein resides in the perikaryon. The protein localises to the cell projection. Its subcellular location is the dendrite. It is found in the nucleus. Functionally, regulates G protein-coupled receptor signaling cascades, including signaling via muscarinic acetylcholine receptor CHRM2 and dopamine receptor DRD2. Inhibits signal transduction by increasing the GTPase activity of G protein alpha subunits, thereby driving them into their inactive GDP-bound form. Modulates the activity of potassium channels that are activated in response to DRD2 and CHRM2 signaling. The polypeptide is Regulator of G-protein signaling 8 (Rgs8) (Mus musculus (Mouse)).